The following is a 294-amino-acid chain: Complement C1q tumor necrosis factor-related protein 2 (294 aa).

The signal sequence occupies residues 1–24 (MTIFKKVTTMISWVLLACALPCAA). Positions 42–156 (QLVCSLPGPQ…PGPCSCGSSR (115 aa)) are disordered. In terms of domain architecture, Collagen-like spans 48–150 (PGPQGPPGPP…KGEPGLPGPC (103 aa)). Positions 50 to 59 (PQGPPGPPGA) are enriched in pro residues. Over residues 75–87 (DGQDGQDGDRGDS) the composition is skewed to basic and acidic residues. Positions 105-129 (KGKAGAIGRAGPRGPKGVSGTPGKH) are enriched in low complexity. The 137-residue stretch at 154-290 (SSRAKSAFSV…GFLIYADQGD (137 aa)) folds into the C1q domain.

In terms of assembly, may interact with ERFE.

It localises to the secreted. Its function is as follows. Involved in the regulation of lipid metabolism in adipose tissue and liver. In Mus musculus (Mouse), this protein is Complement C1q tumor necrosis factor-related protein 2 (C1qtnf2).